The sequence spans 139 residues: Putative nickel-responsive regulator (139 aa).

The Ni(2+) site is built by H79, H90, H92, and C98.

It belongs to the transcriptional regulatory CopG/NikR family. Requires Ni(2+) as cofactor.

In terms of biological role, transcriptional regulator. The polypeptide is Putative nickel-responsive regulator (Anaeromyxobacter dehalogenans (strain 2CP-1 / ATCC BAA-258)).